The following is a 612-amino-acid chain: Dihydroxy-acid dehydratase (612 aa).

Asp-81 is a Mg(2+) binding site. Cys-122 provides a ligand contact to [2Fe-2S] cluster. Mg(2+)-binding residues include Asp-123 and Lys-124. Lys-124 bears the N6-carboxylysine mark. Cys-196 contacts [2Fe-2S] cluster. Mg(2+) is bound at residue Glu-492. Ser-518 functions as the Proton acceptor in the catalytic mechanism.

It belongs to the IlvD/Edd family. In terms of assembly, homodimer. The cofactor is [2Fe-2S] cluster. Mg(2+) is required as a cofactor.

It catalyses the reaction (2R)-2,3-dihydroxy-3-methylbutanoate = 3-methyl-2-oxobutanoate + H2O. The catalysed reaction is (2R,3R)-2,3-dihydroxy-3-methylpentanoate = (S)-3-methyl-2-oxopentanoate + H2O. The protein operates within amino-acid biosynthesis; L-isoleucine biosynthesis; L-isoleucine from 2-oxobutanoate: step 3/4. It functions in the pathway amino-acid biosynthesis; L-valine biosynthesis; L-valine from pyruvate: step 3/4. Functionally, functions in the biosynthesis of branched-chain amino acids. Catalyzes the dehydration of (2R,3R)-2,3-dihydroxy-3-methylpentanoate (2,3-dihydroxy-3-methylvalerate) into 2-oxo-3-methylpentanoate (2-oxo-3-methylvalerate) and of (2R)-2,3-dihydroxy-3-methylbutanoate (2,3-dihydroxyisovalerate) into 2-oxo-3-methylbutanoate (2-oxoisovalerate), the penultimate precursor to L-isoleucine and L-valine, respectively. The sequence is that of Dihydroxy-acid dehydratase from Paracoccus denitrificans (strain Pd 1222).